The sequence spans 521 residues: Cytochrome P450 1A1 (521 aa).

Phe-229 provides a ligand contact to substrate. Cys-463 is a binding site for heme.

The protein belongs to the cytochrome P450 family. Heme serves as cofactor.

The protein resides in the endoplasmic reticulum membrane. Its subcellular location is the microsome membrane. It catalyses the reaction an organic molecule + reduced [NADPH--hemoprotein reductase] + O2 = an alcohol + oxidized [NADPH--hemoprotein reductase] + H2O + H(+). Cytochromes P450 are a group of heme-thiolate monooxygenases. They oxidize a variety of structurally unrelated compounds, including steroids, fatty acids, and xenobiotics. This Sparus aurata (Gilthead sea bream) protein is Cytochrome P450 1A1 (cyp1a1).